Here is a 507-residue protein sequence, read N- to C-terminus: Chromosomal replication initiator protein DnaA (507 aa).

Positions 1-72 (MNNYNKIWEI…KKITKLKFEE (72 aa)) are domain I, interacts with DnaA modulators. The tract at residues 72 to 162 (EKIIIEFVSE…KISFNKYNYG (91 aa)) is domain II. The domain III, AAA+ region stretch occupies residues 163 to 384 (NTNPKYSFDN…GALLRLLNYA (222 aa)). ATP-binding residues include glycine 207, glycine 209, lysine 210, and threonine 211. The interval 385 to 507 (QTFGYDIDIN…LELILKKINS (123 aa)) is domain IV, binds dsDNA.

This sequence belongs to the DnaA family. As to quaternary structure, oligomerizes as a right-handed, spiral filament on DNA at oriC.

The protein localises to the cytoplasm. Its function is as follows. Plays an essential role in the initiation and regulation of chromosomal replication. ATP-DnaA binds to the origin of replication (oriC) to initiate formation of the DNA replication initiation complex once per cell cycle. Binds the DnaA box (a 9 base pair repeat at the origin) and separates the double-stranded (ds)DNA. Forms a right-handed helical filament on oriC DNA; dsDNA binds to the exterior of the filament while single-stranded (ss)DNA is stabiized in the filament's interior. The ATP-DnaA-oriC complex binds and stabilizes one strand of the AT-rich DNA unwinding element (DUE), permitting loading of DNA polymerase. After initiation quickly degrades to an ADP-DnaA complex that is not apt for DNA replication. Binds acidic phospholipids. The chain is Chromosomal replication initiator protein DnaA from Onion yellows phytoplasma (strain OY-M).